A 579-amino-acid polypeptide reads, in one-letter code: Peptidoglycan D,D-transpeptidase FtsI (579 aa).

Residues 15–35 (FCVIVGLLLAMVGAIVWRIVD) form a helical membrane-spanning segment. The active-site Acyl-ester intermediate is the Ser-294. The segment at 558–579 (DNLPTATEQQQVNAAPAKGGRG) is disordered. Residues 561-570 (PTATEQQQVN) show a composition bias toward polar residues.

The protein belongs to the transpeptidase family. FtsI subfamily.

Its subcellular location is the cell inner membrane. The catalysed reaction is Preferential cleavage: (Ac)2-L-Lys-D-Ala-|-D-Ala. Also transpeptidation of peptidyl-alanyl moieties that are N-acyl substituents of D-alanine.. The protein operates within cell wall biogenesis; peptidoglycan biosynthesis. Its function is as follows. Catalyzes cross-linking of the peptidoglycan cell wall at the division septum. Binds penicillin. The polypeptide is Peptidoglycan D,D-transpeptidase FtsI (Pseudomonas aeruginosa (strain ATCC 15692 / DSM 22644 / CIP 104116 / JCM 14847 / LMG 12228 / 1C / PRS 101 / PAO1)).